The sequence spans 254 residues: DNA-3-methyladenine glycosylase (254 aa).

Residues 1–10 show a composition bias toward basic residues; the sequence is MKTPARRSKR. Positions 1–20 are disordered; sequence MKTPARRSKRVNQEESETNV.

The protein belongs to the DNA glycosylase MPG family.

Its subcellular location is the nucleus. It carries out the reaction Hydrolysis of alkylated DNA, releasing 3-methyladenine, 3-methylguanine, 7-methylguanine and 7-methyladenine.. In terms of biological role, hydrolysis of the deoxyribose N-glycosidic bond to excise 3-methyladenine, and 7-methylguanine from the damaged DNA polymer formed by alkylation lesions. In Arabidopsis thaliana (Mouse-ear cress), this protein is DNA-3-methyladenine glycosylase (MAG).